The primary structure comprises 534 residues: Transcription factor RBF1 (534 aa).

A disordered region spans residues 1 to 36 (MSSNKNQSDLNIPTNSASLKQKQRQQLGIKSEIGAS). Residues 77 to 147 (AAAAELQHRA…YQQQQQLHQL (71 aa)) are a coiled coil. Disordered stretches follow at residues 262–285 (ANLYPNEKDQKRKNKPDEPGHNEE), 353–372 (QQQQQQQQHNANSQAQQQAA), 402–439 (QLSQQQSQQQQLHHIPQQRQRTQSQQSQQQPQQTPHGL), and 477–534 (TQGN…SGFL). Residues 267–285 (NEKDQKRKNKPDEPGHNEE) are compositionally biased toward basic and acidic residues. Residues 332–386 (HHLLQQEQQQQQQQQQQQQQQQQQQQQQQHNANSQAQQQAAQLQQQMQQQLQASG) are a coiled coil. Low complexity predominate over residues 402–435 (QLSQQQSQQQQLHHIPQQRQRTQSQQSQQQPQQT).

It belongs to the RBF1 family.

It is found in the nucleus. It localises to the chromosome. Its subcellular location is the telomere. Functionally, transcriptional activator that binds to the RPG box and to telomeres. Involved in the regulation of the transition between yeast and filamentous forms and plays a role in virulence. Induces expression of HWP1, a major hyphal cell protein and virulence factor. In Candida albicans (strain SC5314 / ATCC MYA-2876) (Yeast), this protein is Transcription factor RBF1 (RBF1).